A 303-amino-acid polypeptide reads, in one-letter code: MRIVFMGTPGFAEVILRALVGDKDIEVVGLFTQMDKPFGRKKELKAPETKTYILENHLNIPIFQPQSLKEPEVQILKDLKPNFIVVVAYGKILPKEVLTIAPCINLHASLLPKYRGASPIHEMILNDNKIYGISTMLMDVELDSGDILESASFLREDYLDLDALSLKLAHMGAALLLSTLKNFSSITRKSQDHMQASFCKKITKSDGLVGFKDAKSLFLKSLAFKSWPEIFLENGLKLLEVELVENEKSHKEGEILEIDEKGVLVGCLKGSVRIARLQAVGKKPLKAKDYLNGKRLKIGGILA.

109-112 (SLLP) contacts (6S)-5,6,7,8-tetrahydrofolate.

This sequence belongs to the Fmt family.

The catalysed reaction is L-methionyl-tRNA(fMet) + (6R)-10-formyltetrahydrofolate = N-formyl-L-methionyl-tRNA(fMet) + (6S)-5,6,7,8-tetrahydrofolate + H(+). Functionally, attaches a formyl group to the free amino group of methionyl-tRNA(fMet). The formyl group appears to play a dual role in the initiator identity of N-formylmethionyl-tRNA by promoting its recognition by IF2 and preventing the misappropriation of this tRNA by the elongation apparatus. In Helicobacter pylori (strain ATCC 700392 / 26695) (Campylobacter pylori), this protein is Methionyl-tRNA formyltransferase.